A 457-amino-acid polypeptide reads, in one-letter code: RNA-binding suppressor of PAS kinase protein 1 (457 aa).

Residues 26–88 enclose the R3H domain; the sequence is RIFIIELENS…SCVILFKGEN (63 aa). Disordered stretches follow at residues 142 to 181, 195 to 291, and 406 to 457; these read IDGN…IEKE, LNKS…NGGY, and FQGK…KLNI. A compositionally biased stretch (polar residues) spans 145 to 158; that stretch reads NTRTPNSNLTANSN. Over residues 159–181 the composition is skewed to basic and acidic residues; the sequence is KDQKIEIDDKSSTDLEQERIEKE. Position 198 is a phosphoserine (serine 198). A compositionally biased stretch (low complexity) spans 226–247; it reads SNTQTSNGSVSSSSPFNSSVTT. Positions 248–258 are enriched in polar residues; the sequence is IQVNKPQQQFY. Over residues 418-435 the composition is skewed to basic and acidic residues; sequence KRSDDSNSNKNEGIRRAS. A phosphoserine mark is found at serine 435, serine 439, and serine 447. Residues 443 to 457 show a composition bias toward basic and acidic residues; sequence RDTDSVEMKFDKLNI.

It is found in the cytoplasm. In Saccharomyces cerevisiae (strain ATCC 204508 / S288c) (Baker's yeast), this protein is RNA-binding suppressor of PAS kinase protein 1 (RBS1).